A 155-amino-acid chain; its full sequence is SsrA-binding protein (155 aa).

Belongs to the SmpB family.

It is found in the cytoplasm. Its function is as follows. Required for rescue of stalled ribosomes mediated by trans-translation. Binds to transfer-messenger RNA (tmRNA), required for stable association of tmRNA with ribosomes. tmRNA and SmpB together mimic tRNA shape, replacing the anticodon stem-loop with SmpB. tmRNA is encoded by the ssrA gene; the 2 termini fold to resemble tRNA(Ala) and it encodes a 'tag peptide', a short internal open reading frame. During trans-translation Ala-aminoacylated tmRNA acts like a tRNA, entering the A-site of stalled ribosomes, displacing the stalled mRNA. The ribosome then switches to translate the ORF on the tmRNA; the nascent peptide is terminated with the 'tag peptide' encoded by the tmRNA and targeted for degradation. The ribosome is freed to recommence translation, which seems to be the essential function of trans-translation. This chain is SsrA-binding protein, found in Streptococcus pyogenes serotype M5 (strain Manfredo).